The primary structure comprises 172 residues: ATP synthase subunit b (172 aa).

A helical membrane pass occupies residues 12-32; the sequence is SLYIGDLVFYIVTFIILMLLV. 2 stretches are compositionally biased toward basic and acidic residues: residues 63–74 and 116–131; these read ESAEKMAAKRQA and AQKD…LNSA. The interval 63–131 is disordered; the sequence is ESAEKMAAKR…QARRDALNSA (69 aa).

It belongs to the ATPase B chain family. F-type ATPases have 2 components, F(1) - the catalytic core - and F(0) - the membrane proton channel. F(1) has five subunits: alpha(3), beta(3), gamma(1), delta(1), epsilon(1). F(0) has three main subunits: a(1), b(2) and c(10-14). The alpha and beta chains form an alternating ring which encloses part of the gamma chain. F(1) is attached to F(0) by a central stalk formed by the gamma and epsilon chains, while a peripheral stalk is formed by the delta and b chains.

The protein resides in the cell membrane. In terms of biological role, f(1)F(0) ATP synthase produces ATP from ADP in the presence of a proton or sodium gradient. F-type ATPases consist of two structural domains, F(1) containing the extramembraneous catalytic core and F(0) containing the membrane proton channel, linked together by a central stalk and a peripheral stalk. During catalysis, ATP synthesis in the catalytic domain of F(1) is coupled via a rotary mechanism of the central stalk subunits to proton translocation. Functionally, component of the F(0) channel, it forms part of the peripheral stalk, linking F(1) to F(0). The sequence is that of ATP synthase subunit b from Limosilactobacillus reuteri (strain DSM 20016) (Lactobacillus reuteri).